Consider the following 1481-residue polypeptide: Chromosome partition protein MukB (1481 aa).

34 to 41 (GGNGAGKS) serves as a coordination point for ATP. Coiled coils occupy residues 338 to 480 (SLVQ…QAYQ), 509 to 604 (QHLA…APVW), 780 to 805 (RAAR…ATLS), 835 to 1116 (EAEI…AKAG), and 1210 to 1265 (EAIE…LQAV). The interval 666–783 (PSGAEDSRMI…EVPLFGRAAR (118 aa)) is flexible hinge.

Belongs to the SMC family. MukB subfamily. In terms of assembly, homodimerization via its hinge domain. Binds to DNA via its C-terminal region. Interacts, and probably forms a ternary complex, with MukE and MukF via its C-terminal region. The complex formation is stimulated by calcium or magnesium. Interacts with tubulin-related protein FtsZ.

Its subcellular location is the cytoplasm. It is found in the nucleoid. In terms of biological role, plays a central role in chromosome condensation, segregation and cell cycle progression. Functions as a homodimer, which is essential for chromosome partition. Involved in negative DNA supercoiling in vivo, and by this means organize and compact chromosomes. May achieve or facilitate chromosome segregation by condensation DNA from both sides of a centrally located replisome during cell division. The polypeptide is Chromosome partition protein MukB (Yersinia enterocolitica serotype O:8 / biotype 1B (strain NCTC 13174 / 8081)).